The chain runs to 770 residues: Amyloid-beta precursor protein (770 aa).

The first 17 residues, 1 to 17, serve as a signal peptide directing secretion; that stretch reads MLPSLALLLLAAWTVRA. At 18 to 701 the chain is on the extracellular side; it reads LEVPTDGNAG…AEDVGSNKGA (684 aa). Positions 28-123 are GFLD subdomain; the sequence is LLAEPQIAMF…PYRCLVGEFV (96 aa). The E1 domain maps to 28–189; it reads LLAEPQIAMF…RGVEFVCCPL (162 aa). 6 disulfides stabilise this stretch: C38–C62, C73–C117, C98–C105, C133–C187, C144–C174, and C158–C186. 96–110 lines the heparin pocket; the sequence is NWCKRGRKQCKTHTH. The segment at 131–189 is cuBD subdomain; the sequence is DKCKFLHQERMDVCETHLHWHTVAKETCSEKSTNLHDYGMLLPCGIDKFRGVEFVCCPL. 3 residues coordinate Cu(2+): H147, H151, and Y168. The segment at 181–188 is zinc-binding; sequence GVEFVCCP. Zn(2+)-binding residues include E183, C186, and C187. Residues 193-207 are compositionally biased toward acidic residues; that stretch reads SDSVDSADAEEDDSD. The interval 193–284 is disordered; the sequence is SDSVDSADAE…TTTTTTESVE (92 aa). S198 bears the Phosphoserine; by CK2 mark. S206 bears the Phosphoserine; by CK1 mark. Y217 and Y262 each carry sulfotyrosine. Residues 228–264 are compositionally biased toward acidic residues; it reads VAEEEEVADVEEEEADDDEDVEDGDEVEEEAEEPYEE. A compositionally biased stretch (low complexity) spans 268–281; the sequence is RTTSTATTTTTTTE. Disulfide bonds link C291/C341, C300/C324, and C316/C337. A BPTI/Kunitz inhibitor domain is found at 291-341; sequence CSEQAETGPCRAMISRWYFDVTEGKCVPFFYGGCGGNRNNFDTEEYCMAVC. Sulfotyrosine is present on Y336. Positions 344 to 365 match the OX-2 motif; that stretch reads VSTQSLLKTTSEPLPQDPDKLP. An E2 domain is found at 374 to 565; sequence AVDKYLETPG…EEIQDEVDEL (192 aa). Positions 391 to 423 are heparin-binding; it reads FQKAKERLEAKHRERMSQVMREWEEAERQAKNL. Position 441 is a phosphoserine (S441). The tract at residues 491–522 is heparin-binding; sequence FNMLKKYVRAEQKDRQHTLKHFEHVRMVDPKK. Residue Y497 is modified to Phosphotyrosine. Residues 523-540 form a collagen-binding region; that stretch reads AAQIRSQVMTHLRVIYER. N542 and N571 each carry an N-linked (GlcNAc...) asparagine glycan. Positions 677 and 685 each coordinate Cu(2+). H677 and H685 together coordinate Zn(2+). The tract at residues 695–722 is interaction with PSEN1; that stretch reads VGSNKGAIIGLMVGGVVIATVIVITLVM. The chain crosses the membrane as a helical span at residues 702 to 722; sequence IIGLMVGGVVIATVIVITLVM. The Cytoplasmic segment spans residues 723–770; sequence LKKKQYTSIHHGVVEVDAAVTPEERHLSKMQQNGYENPTYKFFEQMQN. The Basolateral sorting signal signature appears at 724–734; that stretch reads KKKQYTSIHHG. T729 is subject to Phosphothreonine. Position 730 is a phosphoserine; by APP-kinase I (S730). The segment at 732 to 751 is interaction with G(o)-alpha; that stretch reads HHGVVEVDAAVTPEERHLSK. T743 carries the post-translational modification Phosphothreonine; by CDK5 and MAPK10 and LRRK2. The segment at 756 to 770 is interaction with DAB2; it reads GYENPTYKFFEQMQN. Residues 756–770 are required for the interaction with KIF5B and for anterograde transport in axons; sequence GYENPTYKFFEQMQN. Y757 carries the phosphotyrosine; by ABL1 modification. Residues 757–762 carry the YENPXY motif; contains endocytosis signal motif; the sequence is YENPTY. A Glycyl lysine isopeptide (Lys-Gly) (interchain with G-Cter in ubiquitin) cross-link involves residue K763.

The protein belongs to the APP family. As to quaternary structure, binds, via its C-terminus, to the PID domain of several cytoplasmic proteins, including APBB family members, the APBA family, MAPK8IP1, SHC1, NUMB and DAB1. Binding to DAB1 inhibits its serine phosphorylation. Interacts (via NPXY motif) with DAB2 (via PID domain); the interaction is impaired by tyrosine phosphorylation of the NPXY motif. Also interacts with GPCR-like protein BPP, APPBP1, IB1, KNS2 (via its TPR domains), APPBP2 (via BaSS) and DDB1. In vitro, it binds MAPT via the MT-binding domains. Associates with microtubules in the presence of ATP and in a kinesin-dependent manner. Interacts, through a C-terminal domain, with GNAO1. Amyloid-beta protein 42 binds CHRNA7 in hippocampal neurons. Amyloid-beta associates with HADH2. Interacts with ANKS1B and AGER. Interacts with CPEB1. Interacts with ITM2B. Interacts with ITM2C. Interacts with IDE. Can form homodimers; dimerization is enhanced in the presence of Cu(2+) ions. Can form homodimers; this is promoted by heparin binding. Amyloid-beta protein 40 interacts with S100A9. CTF-alpha product of APP interacts with GSAP. Isoform APP695 interacts with SORL1 (via N-terminal ectodomain); this interaction retains APP in the trans-Golgi network and reduces processing into soluble APP-alpha and amyloid-beta peptides. The C99 fragment also interacts with SORL1. Isoform APP751 interacts with SORL1. Isoform APP770 interacts with SORL1. Interacts with PLD3. Interacts with VDAC1. Interacts with NSG1; could regulate APP processing. Amyloid-beta protein 42 interacts with FPR2. Interacts with SYT7. Interacts (via transmembrane region) with PSEN1; the interaction is direct. Interacts with LRRK2. Interacts (via cytoplasmic domain) with KIF5B. Interacts (via C-terminus) with APBB2/FE65L1 (via C-terminus). Interacts (via intracellular domain) with APBB3. Proteolytically processed under normal cellular conditions. Cleavage either by alpha-secretase, beta-secretase or theta-secretase leads to generation and extracellular release of soluble APP peptides, S-APP-alpha and S-APP-beta, and the retention of corresponding membrane-anchored C-terminal fragments, C80, C83 and C99. Subsequent processing of C80 and C83 by gamma-secretase yields P3 peptides. This is the major secretory pathway and is non-amyloidogenic. Alternatively, presenilin/nicastrin-mediated gamma-secretase processing of C99 releases the amyloid-beta proteins, amyloid-beta protein 40 and amyloid-beta protein 42, major components of amyloid plaques, and the cytotoxic C-terminal fragments, gamma-CTF(50), gamma-CTF(57) and gamma-CTF(59). PSEN1 cleavage is more efficient with C83 than with C99 as substrate (in vitro). Amyloid-beta protein 40 and Amyloid-beta protein 42 are cleaved by ACE. Many other minor amyloid-beta peptides, amyloid-beta 1-X peptides, are found in cerebral spinal fluid (CSF) including the amyloid-beta X-15 peptides, produced from the cleavage by alpha-secretase. Post-translationally, proteolytically cleaved by caspases during neuronal apoptosis. Cleavage at Asp-739 by either CASP6, CASP8 or CASP9 results in the production of the neurotoxic C31 peptide and the increased production of amyloid-beta peptides. In terms of processing, N- and O-glycosylated. Phosphorylation in the C-terminal on tyrosine, threonine and serine residues is neuron-specific. Phosphorylation can affect APP processing, neuronal differentiation and interaction with other proteins. Phosphorylated on Thr-743 in neuronal cells by Cdc5 kinase and Mapk10, in dividing cells by Cdc2 kinase in a cell-cycle dependent manner with maximal levels at the G2/M phase and, in vitro, by GSK-3-beta. The Thr-743 phosphorylated form causes a conformational change which reduces binding of Fe65 family members. In dopaminergic (DA) neurons, phosphorylation on Thr-743 by LRKK2 promotes the production and the nuclear translocation of the APP intracellular domain (AICD) which induces DA neuron apoptosis. Phosphorylation on Tyr-757 is required for SHC binding. Phosphorylated in the extracellular domain by casein kinases on both soluble and membrane-bound APP. This phosphorylation is inhibited by heparin. Post-translationally, extracellular binding and reduction of copper, results in a corresponding oxidation of Cys-144 and Cys-158, and the formation of a disulfide bond. In terms of processing, trophic-factor deprivation triggers the cleavage of surface APP by beta-secretase to release sAPP-beta which is further cleaved to release an N-terminal fragment of APP (N-APP). Amyloid-beta peptides are degraded by IDE. Post-translationally, sulfated on tyrosine residues. As to expression, expressed in the brain with expression in cortex, cerebellum, hippocampus, olfactory bulb, neurons, astrocytes and microglia (at protein level). Expressed in the retinal lens. Expressed at a low level in muscle cells (at protein level). In terms of tissue distribution, expressed in kidney. Widely expressed. Expressed in several different brain regions including hippocampus, substantia nigra pars compacta and cerebellum. Within the cerebellum, abundantly expressed in Purkinje cells. As to expression, expressed in the brain, kidney and liver. Expressed in several different brain regions including hippocampus, substantia nigra pars compacta and cerebellum. Within the cerebellum, abundantly expressed in Purkinje cells. In terms of tissue distribution, expressed in several different brain regions including hippocampus, substantia nigra pars compacta and cerebellum. Within the cerebellum, abundantly expressed in Purkinje cells.

It localises to the cell membrane. It is found in the membrane. The protein resides in the perikaryon. The protein localises to the cell projection. Its subcellular location is the growth cone. It localises to the clathrin-coated pit. It is found in the early endosome. The protein resides in the cytoplasmic vesicle. The protein localises to the golgi apparatus. Its subcellular location is the trans-Golgi network. It localises to the endoplasmic reticulum. It is found in the secreted. The protein resides in the cell surface. The protein localises to the nucleus. Its subcellular location is the cytoplasm. Functionally, functions as a cell surface receptor and performs physiological functions on the surface of neurons relevant to neurite growth, neuronal adhesion and axonogenesis. Interaction between APP molecules on neighboring cells promotes synaptogenesis. Involved in cell mobility and transcription regulation through protein-protein interactions. Can promote transcription activation through binding to APBB1-KAT5 and inhibit Notch signaling through interaction with Numb. Couples to apoptosis-inducing pathways such as those mediated by G(o) and JIP. Inhibits G(o)-alpha ATPase activity. Acts as a kinesin I membrane receptor, mediating the axonal transport of beta-secretase and presenilin 1. By acting as a kinesin I membrane receptor, plays a role in axonal anterograde transport of cargo towards synapses in axons. May be involved in copper homeostasis/oxidative stress through copper ion reduction. Can regulate neurite outgrowth through binding to components of the extracellular matrix such as heparin and collagen I and IV. The splice isoforms that contain the BPTI domain possess protease inhibitor activity. Induces a AGER-dependent pathway that involves activation of p38 MAPK, resulting in internalization of amyloid-beta peptide and leading to mitochondrial dysfunction in cultured cortical neurons. Provides Cu(2+) ions for GPC1 which are required for release of nitric oxide (NO) and subsequent degradation of the heparan sulfate chains on GPC1. Amyloid-beta peptides are lipophilic metal chelators with metal-reducing activity. Binds transient metals such as copper, zinc and iron. Rat and mouse amyloid-beta peptides bind only weakly transient metals and have little reducing activity due to substitutions of transient metal chelating residues. Amyloid-beta protein 42 may activate mononuclear phagocytes in the brain and elicit inflammatory responses. Promotes both tau aggregation and TPK II-mediated phosphorylation. Also binds GPC1 in lipid rafts. Its function is as follows. The gamma-CTF peptides as well as the caspase-cleaved peptides, including C31, are potent enhancers of neuronal apoptosis. This chain is Amyloid-beta precursor protein, found in Mus musculus (Mouse).